Reading from the N-terminus, the 572-residue chain is Arginine--tRNA ligase (572 aa).

A 'HIGH' region motif is present at residues 127-137 (ANPTGPLHVGH).

This sequence belongs to the class-I aminoacyl-tRNA synthetase family. Monomer.

The protein resides in the cytoplasm. It carries out the reaction tRNA(Arg) + L-arginine + ATP = L-arginyl-tRNA(Arg) + AMP + diphosphate. In Vesicomyosocius okutanii subsp. Calyptogena okutanii (strain HA), this protein is Arginine--tRNA ligase.